The chain runs to 329 residues: DNA-directed RNA polymerase subunit alpha (329 aa).

The segment at 1 to 235 is alpha N-terminal domain (alpha-NTD); sequence MQGSVTEFLK…EQLEAFVDLR (235 aa). The tract at residues 249–329 is alpha C-terminal domain (alpha-CTD); sequence FDPILLRPVD…NWPPASIADE (81 aa).

The protein belongs to the RNA polymerase alpha chain family. As to quaternary structure, homodimer. The RNAP catalytic core consists of 2 alpha, 1 beta, 1 beta' and 1 omega subunit. When a sigma factor is associated with the core the holoenzyme is formed, which can initiate transcription.

The catalysed reaction is RNA(n) + a ribonucleoside 5'-triphosphate = RNA(n+1) + diphosphate. DNA-dependent RNA polymerase catalyzes the transcription of DNA into RNA using the four ribonucleoside triphosphates as substrates. This chain is DNA-directed RNA polymerase subunit alpha, found in Shigella dysenteriae serotype 1 (strain Sd197).